The sequence spans 666 residues: 1-deoxy-D-xylulose-5-phosphate synthase (666 aa).

Thiamine diphosphate contacts are provided by residues H103 and A144–S146. D175 provides a ligand contact to Mg(2+). Thiamine diphosphate contacts are provided by residues G176–A177, N204, Y314, and E396. N204 contacts Mg(2+).

It belongs to the transketolase family. DXPS subfamily. As to quaternary structure, homodimer. It depends on Mg(2+) as a cofactor. The cofactor is thiamine diphosphate.

The catalysed reaction is D-glyceraldehyde 3-phosphate + pyruvate + H(+) = 1-deoxy-D-xylulose 5-phosphate + CO2. It functions in the pathway metabolic intermediate biosynthesis; 1-deoxy-D-xylulose 5-phosphate biosynthesis; 1-deoxy-D-xylulose 5-phosphate from D-glyceraldehyde 3-phosphate and pyruvate: step 1/1. Functionally, catalyzes the acyloin condensation reaction between C atoms 2 and 3 of pyruvate and glyceraldehyde 3-phosphate to yield 1-deoxy-D-xylulose-5-phosphate (DXP). This chain is 1-deoxy-D-xylulose-5-phosphate synthase, found in Nitrobacter winogradskyi (strain ATCC 25391 / DSM 10237 / CIP 104748 / NCIMB 11846 / Nb-255).